The sequence spans 511 residues: Putative thymidine phosphorylase (511 aa).

Belongs to the thymidine/pyrimidine-nucleoside phosphorylase family. Type 2 subfamily.

It catalyses the reaction thymidine + phosphate = 2-deoxy-alpha-D-ribose 1-phosphate + thymine. The chain is Putative thymidine phosphorylase from Bradyrhizobium sp. (strain BTAi1 / ATCC BAA-1182).